Consider the following 535-residue polypeptide: RAN GTPase-activating protein 1 (535 aa).

A WPP region spans residues 1 to 115; it reads MDHSAKTTQN…EESEVEVSKD (115 aa). LRR repeat units lie at residues 208–231, 236–259, 264–287, 320–343, 353–376, 377–400, 405–428, 433–456, and 461–488; these read GSKL…AFAS, QHDL…AVRE, TDKI…AIAE, CSHL…ALAK, EIYM…LLKS, APSL…NLAA, KQSL…LIAK, HDQL…ALAQ, and KNTF…MFKD. Residues 493-535 form a disordered region; the sequence is LVPLDDNDPEGEDFEDEDEEEEGEDGNELESKLGSLKIKQGEE. Positions 497 to 520 are enriched in acidic residues; sequence DDNDPEGEDFEDEDEEEEGEDGNE.

The protein belongs to the RNA1 family. As to quaternary structure, homodimer. Interacts with WIP1 through its WPP domain. Component of Ran complexes at least composed of WIT1 or WIT2, RANGAP1 or RANGAP2, and WIP1 or WIP2 or WIP3. Interacts directly with WIT1, WIP2 and WIP3. Interacts with POK1.

It is found in the cytoplasm. It localises to the nucleus envelope. The protein localises to the nucleus membrane. Its subcellular location is the cytoskeleton. The protein resides in the spindle. It is found in the phragmoplast. Its function is as follows. GTPase activator for the nuclear Ras-related regulatory protein Ran, converting it to the putatively inactive GDP-bound state. Plays a role in spatial signaling during cell division. This is RAN GTPase-activating protein 1 (RANGAP1) from Arabidopsis thaliana (Mouse-ear cress).